The primary structure comprises 333 residues: Transcription factor MYB94 (333 aa).

2 HTH myb-type domains span residues 9-65 (KIGV…RPGI) and 66-116 (KRGN…KKKL). 2 DNA-binding regions (H-T-H motif) span residues 37-61 (WRSVPTHTGLRRCSKSCRLRWTNYL) and 89-112 (WAAIASYLPERTDNDIKNYWNTHL). Positions 134-154 (KDFSISNKNTTSHQSSNSSKG) are enriched in polar residues. Disordered regions lie at residues 134–157 (KDFSISNKNTTSHQSSNSSKGQWE) and 183–218 (PTNFSIPDLGYGPSSSSSSTTTTTTTTRNTNPYPSG). Low complexity predominate over residues 196–209 (SSSSSSTTTTTTTT).

In terms of tissue distribution, expressed in germinating seeds, rosette and cauline leaves, flower buds, open flowers, stems and developing siliques.

It localises to the nucleus. Functionally, transcription activator involved in the activation of cuticular wax biosynthesis under drought stress. Binds directly to the promoters of genes involved in cuticular wax biosynthesis. Transactivates WSD1, KCS2/DAISY, CER1, CER2, FAR3 and ECR genes. Functions together with MYB96 in the activation of cuticular wax biosynthesis. This chain is Transcription factor MYB94, found in Arabidopsis thaliana (Mouse-ear cress).